The primary structure comprises 624 residues: MQNKKIVILYGSETGNAQDFAHILSHKLKRLHFSHTLIKIGDYHPKSVLQCKYLFIICSTTGQGELPRNARENCNGRAQGTLWQFLKKSTLPADLLDHVNVAMLGLGDSSYPRFNFGIRKLHERIVNQLGASEIFPRLEADELGLAGSNKDTGNGVESVYYEFEKRIIAYMLEKYPNRKHDGKMMPRVGLAEDVYLKPSNILEISTVNGSTNDQLPDSKIQFVGDETIRHGTVKKNNQITAKDHFQDVRQFVFETEDHEAYHPGDTVSLYPENSDNDVELFLEAQPHWKKVADELLTITDLENCDRFRDGGVVKPLTLRTLLKYHFDIVSIPRQSFFMKTWTFANAHEDRPTDQELLEQQRDKLRQFGYGQDLQDLYDYCNRPRRSVLEVIQDFEFLKLPWEFALDYLPMIKPRFYSISSAPSDPNVELTIAIVRYKTLLRKVRKGLCTNYLLTLTENDTVRYKLQNNHLLHEDIIGKPIIMTSPGVGLAPMKCLIESNLFKDQYLFFGNRMKDKDFLYEDTLSMWKKEGKINLFTCFSRDPINSPHAKYVQDQLWNQSSLIADLILKKSAIVYICGSSGKMPVQVRLTIVEILKKHGNFENAEEAEHYLKEMERTDRYMQETW.

Residues 6–168 (IVILYGSETG…VYYEFEKRII (163 aa)) enclose the Flavodoxin-like domain. FMN is bound by residues 12–17 (SETGNA), 59–62 (STTG), 106–115 (LGDSSYPRFN), and Glu142. One can recognise an FAD-binding FR-type domain in the interval 226–474 (ETIRHGTVKK…LQNNHLLHED (249 aa)). FAD-binding positions include Arg384, 414 to 417 (RFYS), and 446 to 449 (GLCT). Residues 539-540 (SR) and 548-552 (AKYVQ) each bind NADP(+). Trp624 is a binding site for FAD.

The protein belongs to the NADPH-dependent diflavin oxidoreductase NDOR1 family. It in the N-terminal section; belongs to the flavodoxin family. In the C-terminal section; belongs to the flavoprotein pyridine nucleotide cytochrome reductase family. In terms of assembly, interacts with DRE2; as part of the cytosolic iron-sulfur (Fe-S) protein assembly (CIA) machinery. FAD serves as cofactor. FMN is required as a cofactor.

It localises to the cytoplasm. Its subcellular location is the mitochondrion. It carries out the reaction 2 oxidized [2Fe-2S]-[protein] + NADPH = 2 reduced [2Fe-2S]-[protein] + NADP(+) + H(+). In terms of biological role, NADPH-dependent reductase which is a central component of the cytosolic iron-sulfur (Fe-S) protein assembly (CIA) machinery. Transfers electrons from NADPH via its FAD and FMN prosthetic groups to the [2Fe-2S] cluster of DRE2, another key component of the CIA machinery. In turn, this reduced cluster provides electrons for assembly of cytosolic iron-sulfur cluster proteins. Positively controls H(2)O(2)-induced cell death. In Kluyveromyces lactis (strain ATCC 8585 / CBS 2359 / DSM 70799 / NBRC 1267 / NRRL Y-1140 / WM37) (Yeast), this protein is NADPH-dependent diflavin oxidoreductase 1.